Reading from the N-terminus, the 102-residue chain is NADH-quinone oxidoreductase subunit K (102 aa).

A run of 3 helical transmembrane segments spans residues 4–24 (IGLNHYLVLSTILFAIGLVGV), 31–51 (LMLFFATEILLNSVNISFAAI), and 65–85 (FFVIAIAASEVAVGLGLLIVW).

The protein belongs to the complex I subunit 4L family. NDH-1 is composed of 14 different subunits. Subunits NuoA, H, J, K, L, M, N constitute the membrane sector of the complex.

The protein resides in the cell inner membrane. The catalysed reaction is a quinone + NADH + 5 H(+)(in) = a quinol + NAD(+) + 4 H(+)(out). NDH-1 shuttles electrons from NADH, via FMN and iron-sulfur (Fe-S) centers, to quinones in the respiratory chain. The immediate electron acceptor for the enzyme in this species is believed to be ubiquinone. Couples the redox reaction to proton translocation (for every two electrons transferred, four hydrogen ions are translocated across the cytoplasmic membrane), and thus conserves the redox energy in a proton gradient. This Sulfurimonas denitrificans (strain ATCC 33889 / DSM 1251) (Thiomicrospira denitrificans (strain ATCC 33889 / DSM 1251)) protein is NADH-quinone oxidoreductase subunit K.